The chain runs to 70 residues: MAKDNIHPNWYPEAKVYCDGQLIMTIGSTKPELHVDIWSGNHPFFTGSQRIIDTEGRVERFMRKYKINKN.

It belongs to the bacterial ribosomal protein bL31 family. Type A subfamily. In terms of assembly, part of the 50S ribosomal subunit.

Its subcellular location is the plastid. The protein localises to the chloroplast. Functionally, binds the 23S rRNA. This chain is Large ribosomal subunit protein bL31c, found in Pyropia yezoensis (Susabi-nori).